Here is a 310-residue protein sequence, read N- to C-terminus: Olfactory receptor 5AR1 (310 aa).

Over 1–25 (MDKENHSVVTEFVFMGITQDPQLQI) the chain is Extracellular. Residue Asn-5 is glycosylated (N-linked (GlcNAc...) asparagine). The helical transmembrane segment at 26–46 (IFFVVFLLVYLVNVIGNVGMI) threads the bilayer. The Cytoplasmic portion of the chain corresponds to 47–54 (ILIITDSQ). Residues 55 to 75 (LHTPMYFFLCNLSFVDLGYSS) traverse the membrane as a helical segment. The Extracellular segment spans residues 76–99 (AIAPRMLADFLTKHKVISFSSCAT). Cysteines 97 and 189 form a disulfide. Residues 100–120 (QFAFFVGFVDAECYVLAAMAY) form a helical membrane-spanning segment. Over 121–133 (DRFVAICRPLHYS) the chain is Cytoplasmic. Residues 134–154 (TLMSKKVCLVLMLGSYFAGLV) form a helical membrane-spanning segment. The Extracellular segment spans residues 155–196 (SLVAHTSLTFSLSYCGSNIINHFFCEIPPLLALSCSDTYISE). A helical transmembrane segment spans residues 197–217 (ILLFSLCGFIEFSTILIIFIS). Position 203 (Cys-203) interacts with Cu cation. At 218–237 (YAFILIAIIRIRSAEGRLKA) the chain is on the cytoplasmic side. A helical membrane pass occupies residues 238–258 (FSTCGSHLTGVTLFYGTVMFM). 2 residues coordinate Cu cation: Met-256 and Arg-261. Over 259-271 (YLRPTSSYSLDQD) the chain is Extracellular. A helical membrane pass occupies residues 272-292 (KWASVFYTIIIPMLNPLIYSL). Topologically, residues 293–310 (RNKDVKAAFKKLIGKKPQ) are cytoplasmic.

The protein belongs to the G-protein coupled receptor 1 family.

Its subcellular location is the cell membrane. Its activity is regulated as follows. Copper binding enhances receptor activity in response to odorant binding. Functionally, olfactory receptor that is activated by the binding of organosulfur odorants with thioether groups such as (methylthio)methanethiol (MTMT). The activity of this receptor is mediated by G proteins which activate adenylyl cyclase. The chain is Olfactory receptor 5AR1 from Mus musculus (Mouse).